The following is a 265-amino-acid chain: 4-hydroxy-tetrahydrodipicolinate reductase (265 aa).

Residues 7–12 (GASGRM) and aspartate 33 each bind NAD(+). Arginine 34 contacts NADP(+). NAD(+) is bound by residues 96–98 (GTT) and 120–123 (AANM). Residue histidine 153 is the Proton donor/acceptor of the active site. Histidine 154 lines the (S)-2,3,4,5-tetrahydrodipicolinate pocket. Lysine 157 acts as the Proton donor in catalysis. 163–164 (GT) provides a ligand contact to (S)-2,3,4,5-tetrahydrodipicolinate.

It belongs to the DapB family.

The protein resides in the cytoplasm. It catalyses the reaction (S)-2,3,4,5-tetrahydrodipicolinate + NAD(+) + H2O = (2S,4S)-4-hydroxy-2,3,4,5-tetrahydrodipicolinate + NADH + H(+). The catalysed reaction is (S)-2,3,4,5-tetrahydrodipicolinate + NADP(+) + H2O = (2S,4S)-4-hydroxy-2,3,4,5-tetrahydrodipicolinate + NADPH + H(+). It participates in amino-acid biosynthesis; L-lysine biosynthesis via DAP pathway; (S)-tetrahydrodipicolinate from L-aspartate: step 4/4. Catalyzes the conversion of 4-hydroxy-tetrahydrodipicolinate (HTPA) to tetrahydrodipicolinate. This Burkholderia cenocepacia (strain ATCC BAA-245 / DSM 16553 / LMG 16656 / NCTC 13227 / J2315 / CF5610) (Burkholderia cepacia (strain J2315)) protein is 4-hydroxy-tetrahydrodipicolinate reductase.